The sequence spans 1295 residues: Protein glp-1 (1295 aa).

The N-terminal stretch at 1–15 (MRVLLILLAFFAPIA) is a signal peptide. The Extracellular portion of the chain corresponds to 16 to 764 (SQLMGGECGR…NEIDEGWSRS (749 aa)). EGF-like domains follow at residues 19 to 58 (MGGE…AFCE), 117 to 152 (GVNP…SYCE), 154 to 190 (GIDH…RYCE), and 190 to 230 (ERTE…EFCN). Disulfide bonds link C23/C35, C29/C46, C48/C57, C121/C131, C126/C140, C142/C151, C158/C169, C163/C178, C180/C189, C201/C206, C220/C229, C236/C248, C242/C257, C259/C268, C275/C286, C280/C296, C298/C307, C329/C342, C336/C347, C349/C358, C373/C384, C378/C394, C396/C405, C411/C422, C416/C431, C433/C442, C450/C461, C455/C467, C469/C478, C496/C519, C501/C514, C510/C526, C536/C560, C542/C555, C551/C567, C582/C595, and C591/C607. The EGF-like 5; calcium-binding domain maps to 232–269 (DKNECLIEETCVNNSTCFNLHGDFTCTCKPGYAGKYCE). N-linked (GlcNAc...) asparagine glycans are attached at residues N244 and N245. 5 EGF-like domains span residues 271-308 (AIDM…QRCE), 316-359 (GGIH…DRCE), 369-406 (DIQS…LNCE), 407-443 (QHLL…DYCE), and 446-479 (DRQL…PTCE). N333 carries N-linked (GlcNAc...) asparagine glycosylation. N381 carries N-linked (GlcNAc...) asparagine glycosylation. LNR repeat units lie at residues 496-532 (CEQR…GQRP), 536-577 (CQYP…CPAH), and 581-612 (HCIE…NGTE). N-linked (GlcNAc...) asparagine glycans are attached at residues N609 and N675. The chain crosses the membrane as a helical span at residues 765 to 786 (QVILFACIAFLAFGTVVAGVIA). The Cytoplasmic segment spans residues 787-1295 (KNGPERSRKR…AEQMNGSFYC (509 aa)). ANK repeat units follow at residues 961 to 990 (DENT…NPTI), 994 to 1023 (SERS…LLKE), 1030 to 1062 (NGMT…KLDY), 1074 to 1103 (KGRT…NKDK), and 1107 to 1136 (DGRT…SLGI). A disordered region spans residues 1177-1244 (IVKSGHGAKS…TTSTPNRMET (68 aa)). Positions 1201 to 1210 (KTPTSAASSR) are enriched in polar residues. Residues 1221-1239 (DGSFSSPSPHYYPTTTSTP) are compositionally biased toward low complexity.

As to quaternary structure, interacts with sel-10. When activated, the glp-1/Notch intracellular domain (NICD) may become a component of a complex consisting of at least the NICD, lag-1 and lag-3. Post-translationally, upon binding its ligands, it is cleaved (S2 cleavage) in its extracellular domain, close to the transmembrane domain. S2 cleavage is probably mediated by the metalloproteases adm-4 and sup-17. It is then cleaved (S3 cleavage) downstream of its transmembrane domain, releasing it from the cell membrane; S3 cleavage requires a multiprotein gamma-secretase complex, which may include presenilin sel-12. Expressed in the distal mitotic region of the germ line. May be absent from the gonadal distal tip cell (DTC).

Its subcellular location is the cell membrane. The protein resides in the cell projection. It is found in the axon. It localises to the nucleus. Functionally, essential signaling protein which has a major role in germline and embryonic development; involved in cell fate decisions that require cell-cell interactions. Probable membrane-bound receptor for putative ligands lag-2 and apx-1. Upon ligand activation, and releasing from the cell membrane, the glp-1/Notch intracellular domain (NICD) probably forms a transcriptional activator complex with lag-1 and lag-3 and regulates expression of various genes; targets in the germline include lst-1 and sygl-1. Involved in the specification of the cell fates of the blastomeres, ABa and ABp. Proper signaling by glp-1 induces ABa descendants to produce anterior pharyngeal cells, and ABp descendants to adopt a different fate. Contributes to the establishment of the dorsal-ventral axis in early embryos. Required in postmitotic neurons in order to maintain the developmentally arrested larval state known as dauer, probably in response to lag-2. Regulates germ cell mitotic proliferation probably by regulating MAP kinase phosphatase lip-1 expression. Required for oocyte growth control. Plays a negative role in lifespan. In Caenorhabditis elegans, this protein is Protein glp-1.